The following is a 633-amino-acid chain: Extracellular metalloproteinase 5 (633 aa).

An N-terminal signal peptide occupies residues 1–21 (MHGLLLAAAGLLSLPLHVIAH). Positions 22 to 245 (PQPSTNLAGR…HNVVDYVSHA (224 aa)) are excised as a propeptide. N286 carries an N-linked (GlcNAc...) asparagine glycan. H428 provides a ligand contact to Zn(2+). Residue E429 is part of the active site. Zn(2+) is bound at residue H432. N592 and N621 each carry an N-linked (GlcNAc...) asparagine glycan.

This sequence belongs to the peptidase M36 family. Zn(2+) serves as cofactor.

It is found in the secreted. In terms of biological role, secreted metalloproteinase probably acting as a virulence factor. The polypeptide is Extracellular metalloproteinase 5 (MEP5) (Arthroderma benhamiae (Trichophyton mentagrophytes)).